Reading from the N-terminus, the 467-residue chain is Probable tryptophanase (467 aa).

At K263 the chain carries N6-(pyridoxal phosphate)lysine.

This sequence belongs to the beta-eliminating lyase family. It depends on pyridoxal 5'-phosphate as a cofactor.

It carries out the reaction L-tryptophan + H2O = indole + pyruvate + NH4(+). Its pathway is amino-acid degradation; L-tryptophan degradation via pyruvate pathway; indole and pyruvate from L-tryptophan: step 1/1. The protein is Probable tryptophanase (tnaA) of Aeropyrum pernix (strain ATCC 700893 / DSM 11879 / JCM 9820 / NBRC 100138 / K1).